Reading from the N-terminus, the 223-residue chain is Thiamine-phosphate synthase (223 aa).

4-amino-2-methyl-5-(diphosphooxymethyl)pyrimidine contacts are provided by residues 37–41 (QFREK) and Asp-72. Residues Asp-73 and Asp-92 each contribute to the Mg(2+) site. Ser-110 is a binding site for 4-amino-2-methyl-5-(diphosphooxymethyl)pyrimidine. 2-[(2R,5Z)-2-carboxy-4-methylthiazol-5(2H)-ylidene]ethyl phosphate is bound at residue 136-138 (TQS). A 4-amino-2-methyl-5-(diphosphooxymethyl)pyrimidine-binding site is contributed by Lys-139. 2-[(2R,5Z)-2-carboxy-4-methylthiazol-5(2H)-ylidene]ethyl phosphate is bound by residues Gly-168 and 188–189 (IS).

Belongs to the thiamine-phosphate synthase family. Mg(2+) serves as cofactor.

It carries out the reaction 2-[(2R,5Z)-2-carboxy-4-methylthiazol-5(2H)-ylidene]ethyl phosphate + 4-amino-2-methyl-5-(diphosphooxymethyl)pyrimidine + 2 H(+) = thiamine phosphate + CO2 + diphosphate. The enzyme catalyses 2-(2-carboxy-4-methylthiazol-5-yl)ethyl phosphate + 4-amino-2-methyl-5-(diphosphooxymethyl)pyrimidine + 2 H(+) = thiamine phosphate + CO2 + diphosphate. It catalyses the reaction 4-methyl-5-(2-phosphooxyethyl)-thiazole + 4-amino-2-methyl-5-(diphosphooxymethyl)pyrimidine + H(+) = thiamine phosphate + diphosphate. The protein operates within cofactor biosynthesis; thiamine diphosphate biosynthesis; thiamine phosphate from 4-amino-2-methyl-5-diphosphomethylpyrimidine and 4-methyl-5-(2-phosphoethyl)-thiazole: step 1/1. In terms of biological role, condenses 4-methyl-5-(beta-hydroxyethyl)thiazole monophosphate (THZ-P) and 2-methyl-4-amino-5-hydroxymethyl pyrimidine pyrophosphate (HMP-PP) to form thiamine monophosphate (TMP). This is Thiamine-phosphate synthase from Streptococcus agalactiae serotype III (strain NEM316).